Reading from the N-terminus, the 288-residue chain is Serine/threonine-protein acetyltransferase YopJ (288 aa).

Active-site residues include His109 and Glu128. CoA is bound at residue His109. 167–168 is a binding site for CoA; it reads RS. Cys172 is a catalytic residue. 1D-myo-inositol hexakisphosphate is bound by residues 182-185 and 224-225; these read KLYI and KH. 227–230 contributes to the CoA binding site; it reads QGKK. Arg257 contacts 1D-myo-inositol hexakisphosphate. 266 to 270 contacts CoA; it reads DGKEL.

It belongs to the acetyltransferase YopJ family. 1D-myo-inositol hexakisphosphate is required as a cofactor.

Its subcellular location is the secreted. The enzyme catalyses L-threonyl-[protein] + acetyl-CoA = O-acetyl-L-threonyl-[protein] + CoA. It carries out the reaction L-seryl-[protein] + acetyl-CoA = O-acetyl-L-seryl-[protein] + CoA. Its activity is regulated as follows. 1D-myo-inositol hexakisphosphate activates protein-acetyltransferase activity via an allosteric mechanism: 1D-myo-inositol hexakisphosphate-binding induces a conformational rearrangement that stimulates the interaction with acetyl-CoA. Functionally, serine/threonine-protein acetyltransferase translocated into infected cells, which inhibits the host immune response and induces cell death by mediating acetylation of target proteins. Inhibits the MAPK and NF-kappa-B signaling pathways by acetylating protein-kinases such as MAP2K1, MAP2K6, MAP3K7/TAK1 and I-kappa-B kinase (CHUK/IKKA and IKBKB) on serine and threonine residues critical for their activation by phosphorylation, thereby preventing protein-kinase activation. Promotes pyroptosis, a programmed cell death, in host cells by mediating acetylation of MAP3K7/TAK1: MAP3K7/TAK1 inactivation triggers activation of caspase-8 (CASP8), followed by CASP8-dependent cleavage of gasdermin-D (GSDMD) and induction of pyroptosis. This chain is Serine/threonine-protein acetyltransferase YopJ, found in Yersinia pestis.